The primary structure comprises 488 residues: N-succinylglutamate 5-semialdehyde dehydrogenase (488 aa).

Residue 221-226 participates in NAD(+) binding; the sequence is GSSRTG. Residues Glu244 and Cys278 contribute to the active site.

It belongs to the aldehyde dehydrogenase family. AstD subfamily.

The catalysed reaction is N-succinyl-L-glutamate 5-semialdehyde + NAD(+) + H2O = N-succinyl-L-glutamate + NADH + 2 H(+). Its pathway is amino-acid degradation; L-arginine degradation via AST pathway; L-glutamate and succinate from L-arginine: step 4/5. Catalyzes the NAD-dependent reduction of succinylglutamate semialdehyde into succinylglutamate. This chain is N-succinylglutamate 5-semialdehyde dehydrogenase, found in Pseudomonas savastanoi pv. phaseolicola (strain 1448A / Race 6) (Pseudomonas syringae pv. phaseolicola (strain 1448A / Race 6)).